The chain runs to 102 residues: Large ribosomal subunit protein bL21 (102 aa).

This sequence belongs to the bacterial ribosomal protein bL21 family. Part of the 50S ribosomal subunit. Contacts protein L20.

Functionally, this protein binds to 23S rRNA in the presence of protein L20. This chain is Large ribosomal subunit protein bL21, found in Zymomonas mobilis subsp. mobilis (strain ATCC 31821 / ZM4 / CP4).